The chain runs to 112 residues: Divalent-cation tolerance protein CutA (112 aa).

Positions 16, 83, and 84 each coordinate Cu cation.

This sequence belongs to the CutA family. Homotrimer. Cu cation serves as cofactor.

The protein resides in the cytoplasm. In terms of biological role, involved in resistance toward heavy metals. In Shigella flexneri, this protein is Divalent-cation tolerance protein CutA.